A 233-amino-acid polypeptide reads, in one-letter code: Purine nucleoside phosphorylase DeoD-type (233 aa).

A purine D-ribonucleoside is bound at residue His-4. Residues Gly-20, Arg-24, Arg-43, and 87-90 (RVGS) contribute to the phosphate site. A purine D-ribonucleoside contacts are provided by residues 178 to 180 (EME) and 202 to 203 (SD). Asp-203 serves as the catalytic Proton donor.

The protein belongs to the PNP/UDP phosphorylase family. In terms of assembly, homohexamer; trimer of homodimers.

The enzyme catalyses a purine D-ribonucleoside + phosphate = a purine nucleobase + alpha-D-ribose 1-phosphate. The catalysed reaction is a purine 2'-deoxy-D-ribonucleoside + phosphate = a purine nucleobase + 2-deoxy-alpha-D-ribose 1-phosphate. Functionally, catalyzes the reversible phosphorolytic breakdown of the N-glycosidic bond in the beta-(deoxy)ribonucleoside molecules, with the formation of the corresponding free purine bases and pentose-1-phosphate. The polypeptide is Purine nucleoside phosphorylase DeoD-type (Bacillus subtilis (strain 168)).